A 294-amino-acid polypeptide reads, in one-letter code: Nucleophosmin (294 aa).

N-acetylmethionine is present on M1. A necessary for interaction with APEX1 region spans residues 1-117 (MEDSMDMDMS…PVHISGQHLV (117 aa)). The required for interaction with SENP3 stretch occupies residues 1–186 (MEDSMDMDMS…DDDDFDDEEA (186 aa)). A Phosphoserine; by PLK1 and PLK2 modification is found at S4. At S10 the chain carries Phosphoserine. K27 is covalently cross-linked (Glycyl lysine isopeptide (Lys-Gly) (interchain with G-Cter in SUMO2)). K32 carries the N6-acetyllysine; alternate modification. K32 participates in a covalent cross-link: Glycyl lysine isopeptide (Lys-Gly) (interchain with G-Cter in SUMO1); alternate. A Glycyl lysine isopeptide (Lys-Gly) (interchain with G-Cter in SUMO2); alternate cross-link involves residue K32. S43 bears the Phosphoserine mark. Residue Y67 is modified to Phosphotyrosine. At S70 the chain carries Phosphoserine. T75 and T95 each carry phosphothreonine. A compositionally biased stretch (acidic residues) spans 120–132 (EEDAESEDEEEED). Positions 120–247 (EEDAESEDEE…PKGPSSVEDI (128 aa)) are disordered. S125 is modified (phosphoserine; by CDK2). 2 positions are modified to phosphoserine: S137 and S139. Residue K141 forms a Glycyl lysine isopeptide (Lys-Gly) (interchain with G-Cter in SUMO2) linkage. The residue at position 150 (K150) is an N6-acetyllysine; alternate. Residue K150 forms a Glycyl lysine isopeptide (Lys-Gly) (interchain with G-Cter in SUMO2); alternate linkage. A Nuclear localization signal motif is present at residues 152–157 (PQKKVK). K154 carries the post-translational modification N6-acetyllysine. Positions 161–187 (DEDDDDDDEEDDDEDDDDDDFDDEEAE) are enriched in acidic residues. Residues 187–215 (EEKAPVKKSIRDTPAKNAQKSNQNGKDSK) form an interaction with NOP2 region. Residues 188 to 200 (EKAPVKKSIRDTP) show a composition bias toward basic and acidic residues. The Nuclear localization signal motif lies at 191 to 197 (PVKKSIR). T199 bears the Phosphothreonine; by CDK1, CDK2 and CDK6 mark. Positions 202-222 (KNAQKSNQNGKDSKPSSTPRS) are enriched in polar residues. S207 bears the ADP-ribosylserine mark. An N6-acetyllysine modification is found at K212. A Glycyl lysine isopeptide (Lys-Gly) (interchain with G-Cter in SUMO2) cross-link involves residue K215. T219 is modified (phosphothreonine; by CDK1). The span at 223–235 (KGQESFKKQEKTP) shows a compositional bias: basic and acidic residues. S227 is modified (phosphoserine). An N6-acetyllysine modification is found at K229. K230 carries the N6-acetyllysine; alternate modification. Residue K230 forms a Glycyl lysine isopeptide (Lys-Gly) (interchain with G-Cter in SUMO); alternate linkage. 2 positions are modified to phosphothreonine; by CDK1: T234 and T237. A phosphoserine mark is found at S242 and S243. The tract at residues 243 to 294 (SVEDIKAKMQASIEKGGSLPKVEAKFINYVKNCFRMTDQEAIQDLWQWRKSL) is required for nucleolar localization. K248 participates in a covalent cross-link: Glycyl lysine isopeptide (Lys-Gly) (interchain with G-Cter in SUMO1); alternate. Glycyl lysine isopeptide (Lys-Gly) (interchain with G-Cter in SUMO2); alternate cross-links involve residues K248 and K250. At K250 the chain carries N6-acetyllysine; alternate. S254 carries the post-translational modification Phosphoserine. K257 carries the post-translational modification N6-acetyllysine; alternate. A Glycyl lysine isopeptide (Lys-Gly) (interchain with G-Cter in SUMO1); alternate cross-link involves residue K257. A Glycyl lysine isopeptide (Lys-Gly) (interchain with G-Cter in SUMO2); alternate cross-link involves residue K257. K257 carries the post-translational modification N6-acetyllysine. Position 260 is a phosphoserine (S260). Residues K263, K267, and K273 each participate in a glycyl lysine isopeptide (Lys-Gly) (interchain with G-Cter in SUMO2); alternate cross-link. K263 participates in a covalent cross-link: Glycyl lysine isopeptide (Lys-Gly) (interchain with G-Cter in SUMO); alternate. N6-acetyllysine; alternate is present on residues K267 and K273. K267 is covalently cross-linked (Glycyl lysine isopeptide (Lys-Gly) (interchain with G-Cter in SUMO1); alternate). An N6-succinyllysine; alternate modification is found at K267. T279 carries the phosphothreonine modification. K292 carries the N6-acetyllysine modification.

Belongs to the nucleoplasmin family. In terms of assembly, decamer formed by two pentameric rings associated in a head-to-head fashion. Disulfide-linked dimers under certain conditions. The SWAP complex consists of NPM1, NCL, PARP1 and SWAP70. Interacts with NSUN2 and SENP3. Interacts with the methylated form of RPS10. Interacts (via N-terminal domain) with APEX1; the interaction is RNA-dependent and decreases in hydrogen peroxide-damaged cells. Interacts with isoform 1 of NEK2. Interacts with ROCK2 and BRCA2. Interacts with RPGR. Interacts with CENPW. Interacts with EIF2AK2/PKR. Interacts with CEBPA (isoform 4). Interacts with DDX31; this interaction prevents interaction between NPM1 and HDM2. Interacts with MYC; competitive with NOP53. Interacts with NOP53; the interaction is direct and competitive with MYC. Interacts with LRRC34. Interacts with RRP1B. Interacts with NPM3. Interacts with ALKBH2. Interacts with TTF1 (via C-terminal region). Interacts with NOP2. Interacts with ARID3C (via REKLES DOMAIN); the interaction mediates ARID3C nuclear shuttling. (Microbial infection) Interacts with hepatitis delta virus S-HDAg. As to quaternary structure, (Microbial infection) Interacts with HTLV1 Rex protein (via N-terminal nuclear localization signal). Acetylated at C-terminal lysine residues, thereby increasing affinity to histones. In terms of processing, ADP-ribosylated. Post-translationally, phosphorylated at Ser-4 by PLK1 and PLK2. Phosphorylation at Ser-4 by PLK2 in S phase is required for centriole duplication and is sufficient to trigger centriole replication. Phosphorylation at Ser-4 by PLK1 takes place during mitosis. Phosphorylated by CDK2 at Ser-125 and Thr-199. Phosphorylation at Thr-199 may trigger initiation of centrosome duplication. Phosphorylated by CDK1 at Thr-199, Thr-219, Thr-234 and Thr-237 during cell mitosis. When these four sites are phosphorated, RNA-binding activity seem to be abolished. May be phosphorylated at Ser-70 by NEK2. The Thr-199 phosphorylated form has higher affinity for ROCK2. CDK6 triggers Thr-199 phosphorylation when complexed to Kaposi's sarcoma herpesvirus (KSHV) V-cyclin, leading to viral reactivation by reducing viral LANA levels. Sumoylated by ARF. In terms of processing, ubiquitinated. Ubiquitination leads to proteasomal degradation. Deubiquitinated by USP36.

Its subcellular location is the nucleus. The protein localises to the nucleolus. It localises to the nucleoplasm. It is found in the cytoplasm. The protein resides in the cytoskeleton. Its subcellular location is the microtubule organizing center. The protein localises to the centrosome. Functionally, involved in diverse cellular processes such as ribosome biogenesis, centrosome duplication, protein chaperoning, histone assembly, cell proliferation, and regulation of tumor suppressors p53/TP53 and ARF. Binds ribosome presumably to drive ribosome nuclear export. Associated with nucleolar ribonucleoprotein structures and bind single-stranded nucleic acids. Acts as a chaperonin for the core histones H3, H2B and H4. Stimulates APEX1 endonuclease activity on apurinic/apyrimidinic (AP) double-stranded DNA but inhibits APEX1 endonuclease activity on AP single-stranded RNA. May exert a control of APEX1 endonuclease activity within nucleoli devoted to repair AP on rDNA and the removal of oxidized rRNA molecules. In concert with BRCA2, regulates centrosome duplication. Regulates centriole duplication: phosphorylation by PLK2 is able to trigger centriole replication. Negatively regulates the activation of EIF2AK2/PKR and suppresses apoptosis through inhibition of EIF2AK2/PKR autophosphorylation. Antagonizes the inhibitory effect of ATF5 on cell proliferation and relieves ATF5-induced G2/M blockade. In complex with MYC enhances the transcription of MYC target genes. May act as chaperonin or cotransporter in the nucleolar localization of transcription termination factor TTF1. This is Nucleophosmin from Homo sapiens (Human).